We begin with the raw amino-acid sequence, 83 residues long: uncharacterized protein (83 aa).

This is an uncharacterized protein from Rhizobium meliloti (strain 1021) (Ensifer meliloti).